We begin with the raw amino-acid sequence, 290 residues long: ATP synthase gamma chain (290 aa).

It belongs to the ATPase gamma chain family. As to quaternary structure, F-type ATPases have 2 components, CF(1) - the catalytic core - and CF(0) - the membrane proton channel. CF(1) has five subunits: alpha(3), beta(3), gamma(1), delta(1), epsilon(1). CF(0) has three main subunits: a, b and c.

The protein resides in the cell inner membrane. In terms of biological role, produces ATP from ADP in the presence of a proton gradient across the membrane. The gamma chain is believed to be important in regulating ATPase activity and the flow of protons through the CF(0) complex. The chain is ATP synthase gamma chain from Bacteroides fragilis (strain ATCC 25285 / DSM 2151 / CCUG 4856 / JCM 11019 / LMG 10263 / NCTC 9343 / Onslow / VPI 2553 / EN-2).